We begin with the raw amino-acid sequence, 338 residues long: Aspartate carbamoyltransferase catalytic subunit (338 aa).

2 residues coordinate carbamoyl phosphate: R59 and T60. K87 is an L-aspartate binding site. Carbamoyl phosphate is bound by residues R109, H142, and Q145. Residues R182 and R253 each contribute to the L-aspartate site. Positions 294 and 295 each coordinate carbamoyl phosphate.

It belongs to the aspartate/ornithine carbamoyltransferase superfamily. ATCase family. Heterododecamer (2C3:3R2) of six catalytic PyrB chains organized as two trimers (C3), and six regulatory PyrI chains organized as three dimers (R2).

It catalyses the reaction carbamoyl phosphate + L-aspartate = N-carbamoyl-L-aspartate + phosphate + H(+). Its pathway is pyrimidine metabolism; UMP biosynthesis via de novo pathway; (S)-dihydroorotate from bicarbonate: step 2/3. Functionally, catalyzes the condensation of carbamoyl phosphate and aspartate to form carbamoyl aspartate and inorganic phosphate, the committed step in the de novo pyrimidine nucleotide biosynthesis pathway. In Prochlorococcus marinus (strain MIT 9515), this protein is Aspartate carbamoyltransferase catalytic subunit.